The following is a 310-amino-acid chain: Acetyl-coenzyme A carboxylase carboxyl transferase subunit beta, chloroplastic (310 aa).

Residues 47–310 (LWARCDNCGN…LYLSVPYNKN (264 aa)) enclose the CoA carboxyltransferase N-terminal domain. Residues Cys-51, Cys-54, Cys-70, and Cys-73 each coordinate Zn(2+). The C4-type zinc-finger motif lies at 51-73 (CDNCGNMLYVKFLKQNRSVCEEC).

Belongs to the AccD/PCCB family. Acetyl-CoA carboxylase is a heterohexamer composed of biotin carboxyl carrier protein, biotin carboxylase and 2 subunits each of ACCase subunit alpha and ACCase plastid-coded subunit beta (accD). The cofactor is Zn(2+).

It is found in the plastid. Its subcellular location is the chloroplast stroma. The enzyme catalyses N(6)-carboxybiotinyl-L-lysyl-[protein] + acetyl-CoA = N(6)-biotinyl-L-lysyl-[protein] + malonyl-CoA. Its pathway is lipid metabolism; malonyl-CoA biosynthesis; malonyl-CoA from acetyl-CoA: step 1/1. Functionally, component of the acetyl coenzyme A carboxylase (ACC) complex. Biotin carboxylase (BC) catalyzes the carboxylation of biotin on its carrier protein (BCCP) and then the CO(2) group is transferred by the transcarboxylase to acetyl-CoA to form malonyl-CoA. The sequence is that of Acetyl-coenzyme A carboxylase carboxyl transferase subunit beta, chloroplastic from Adiantum capillus-veneris (Maidenhair fern).